The primary structure comprises 650 residues: Sodium-dependent phosphate transporter 2 (650 aa).

The Extracellular segment spans residues 1–5; that stretch reads MAMDG. Residues 6–26 traverse the membrane as a helical segment; it reads YLWMVILGFIIAFILAFSVGA. At 27 to 46 the chain is on the cytoplasmic side; that stretch reads NDVANSFGTAVGSGVVTLRQ. Residues 47–67 form a helical membrane-spanning segment; the sequence is ACILASIFETTGSVLLGAKVG. The Extracellular segment spans residues 68–83; sequence ETIRKGIIDVNLYNDT. Asn-81 is a glycosylation site (N-linked (GlcNAc...) asparagine). The chain crosses the membrane as a helical span at residues 84–104; sequence VVTLMAGEVSAMVGSAVWQLI. Residues 105–109 are Cytoplasmic-facing; that stretch reads ASFLR. Residues 110-130 traverse the membrane as a helical segment; that stretch reads LPISGTHCIVGSTIGFSLVAN. The Extracellular portion of the chain corresponds to 131–142; the sequence is GTKGVQWMELVK. The chain crosses the membrane as a helical span at residues 143 to 163; it reads IVASWFISPLLSGFMSGVLFV. At 164–192 the chain is on the cytoplasmic side; it reads LIRMFILTKEDPVPNGLQALPLFYAATIA. Residues 193 to 212 form a helical membrane-spanning segment; sequence INVFSIMYTGAPVLGLSLPI. Trp-213 is a topological domain (extracellular). Residues 214–234 traverse the membrane as a helical segment; sequence AIALISFGVALLFAFFVWLFV. Topologically, residues 235–482 are cytoplasmic; it reads CPWMRRKIAG…EEKEEKDTAE (248 aa). A phosphoserine mark is found at Ser-253, Ser-256, Ser-259, Ser-268, Ser-315, and Ser-384. The interval 268–310 is disordered; sequence SPFKELPGAKASDDSAVPLTNPTGEAVGPSEGTSTGNHPRTAY. The chain crosses the membrane as a helical span at residues 483–503; it reads VHLLFHFLQVLTACFGSFAHG. Residues 504 to 530 lie on the Extracellular side of the membrane; it reads GNDVSNAIGPLVALWLIYEQGGVMQEA. The chain crosses the membrane as a helical span at residues 531–551; the sequence is ATPVWLLFYGGVGICTGLWVW. Residues 552–571 lie on the Cytoplasmic side of the membrane; that stretch reads GRRVIQTMGKDLTPITPSSG. The chain crosses the membrane as a helical span at residues 572–586; sequence FTIELASAFTVVIAS. The Extracellular segment spans residues 587 to 593; sequence NIGLPVS. The chain crosses the membrane as a helical span at residues 594-609; that stretch reads TTHCKVGSVVAVGWIR. Residues 610 to 621 lie on the Cytoplasmic side of the membrane; it reads SRKAVDWHLFRN. A helical membrane pass occupies residues 622 to 642; the sequence is IFVAWFVTVPVAGLFSAAIMA. Residues 643–650 lie on the Extracellular side of the membrane; that stretch reads IFMYGILS.

The protein belongs to the inorganic phosphate transporter (PiT) (TC 2.A.20) family. Homodimer.

Its subcellular location is the cell membrane. The protein resides in the apical cell membrane. The enzyme catalyses 2 Na(+)(out) + phosphate(out) = 2 Na(+)(in) + phosphate(in). Its function is as follows. Sodium-phosphate symporter which preferentially transports the monovalent form of phosphate with a stoichiometry of two sodium ions per phosphate ion. Plays a critical role in the determination of bone quality and strength by providing phosphate for bone mineralization. Required to maintain normal cerebrospinal fluid phosphate levels. Mediates phosphate-induced calcification of vascular smooth muscle cells (VCMCs) and can functionally compensate for loss of SLC20A1 in VCMCs. Functionally, (Microbial infection) Functions as a retroviral receptor and confers hamster cells susceptibility to infection to Gibbon Ape Leukemia Virus (GaLV) and amphotropic murine leukemia virus (A-MuLV). This chain is Sodium-dependent phosphate transporter 2 (SLC20A2), found in Cricetulus griseus (Chinese hamster).